The primary structure comprises 810 residues: MRAKNGPGSWLALTAIATSLNTLALAAAKTINHSYEFNPVVVSGGGYITGIIAHPTEKNLLYARTDIGGTYRWNADEDKWIPLNDFISGADENLLGTESVALDPNDPDRLYLAQGRYLNSENSAFFVSQDRGATFDVYPAPFKMGANELGRNNGERLAVNPFKTDELWMGTRDAGLMVSEDGAQTWRNVSGFPQANANGIGIYWVIFDPRSEGTVYVGVGVPGGIYVTRDSGESWEAVPGQPVEWDEDILVFPAESQPQSTGPQPMKGVLAENGALYVTYADAPGPYGVTYGGVYVYNTTSSAWTNITPKTNNSFPAPFDNQTFPAGGFCGISVDSKNPERLVVVSLDRDPGPALDSMYLSHDGGKSWKDVSQLSTPSGSGGYWGHPIEEAAFKDGTAVPWLSFNWGPQWGGYGAPSPVRGLTKFGWWMTAVVIDPSDSDHVLYGTGATIWATDNLSKVDKNQSPGWYIQAQGIEESVALALASPNGGDSHLLTGLGDINGYRYGDLDVPQPMFDLPVLSNLNALDWAGQKPEIIIRAGPCGHNYTDGCGLAAYSADGGSSWTKFATCIPGINTSSSNPGVIAIDASGKDIVWSSAMTAYWPTLQAITPRTNQSGPYVTTDLGQTWVSPTGLNVQTPNISADRVQPRTFYSFTDGTWYLSRDGGLSYRAYKAKEVGLPAYSGALPIANFNRAGEIWLGLGDHGIYHTRNFGKKWTKITGRGVTARQLTIGAGARRSSEPTLFIVGKAASHGALSKDGVYRSDDNGKTWVRVNDEKHQYGGIAMIQGDPRVYGRVYLGTGGRGIIYADIKE.

Residues 1-28 (MRAKNGPGSWLALTAIATSLNTLALAAA) form the signal peptide. The N-linked (GlcNAc...) asparagine glycan is linked to Asn32. The active-site Nucleophile is the Asp66. One copy of the BNR 1 repeat lies at 126–135 (FVSQDRGATF). A glycan (N-linked (GlcNAc...) asparagine) is linked at Asn188. A BNR 2 repeat occupies 226 to 236 (YVTRDSGESWE). Residues Asn298, Asn312, and Asn321 are each glycosylated (N-linked (GlcNAc...) asparagine). Residues 359–369 (YLSHDGGKSWK) form a BNR 3 repeat. Residue Asn455 is glycosylated (N-linked (GlcNAc...) asparagine). Asp498 functions as the Proton donor in the catalytic mechanism. N-linked (GlcNAc...) asparagine glycosylation occurs at Asn544. A BNR 4 repeat occupies 554–564 (YSADGGSSWTK). N-linked (GlcNAc...) asparagine glycosylation is found at Asn573 and Asn612. The stretch at 617–626 (YVTTDLGQTW) is one BNR 5 repeat. Asn638 carries N-linked (GlcNAc...) asparagine glycosylation. BNR repeat units lie at residues 658–667 (YLSRDGGLSY), 705–716 (YHTRNFGKKWTK), and 759–769 (YRSDDNGKTWV).

Belongs to the glycosyl hydrolase 74 family.

The protein localises to the secreted. It catalyses the reaction Hydrolysis of cellobiose from the reducing end of xyloglucans consisting of a beta-(1-&gt;4)-linked glucan carrying alpha-D-xylosyl groups on O-6 of the glucose residues. To be a substrate, the first residue must be unsubstituted, the second residue may bear a xylosyl group, whether further glycosylated or not, and the third residue, which becomes the new terminus by the action of the enzyme, is preferably xylosylated, but this xylose residue must not be further substituted.. Its function is as follows. Oligoxyloglucan-reducing end-specific xyloglucanase involved in degradation of xyloglucans. Releases the first two glycosyl segments from oligoxyloglucans. Active against cotton xyloglucan, tamarind xyloglucan and tamarind xyloglucan oligomers. In Emericella nidulans (strain FGSC A4 / ATCC 38163 / CBS 112.46 / NRRL 194 / M139) (Aspergillus nidulans), this protein is Oligoxyloglucan-reducing end-specific xyloglucanase (xgcA).